Consider the following 238-residue polypeptide: Probable xyloglucan-specific endo-beta-1,4-glucanase A (238 aa).

The N-terminal stretch at Met1–Ala18 is a signal peptide. Residues Asn106 and Asn171 are each glycosylated (N-linked (GlcNAc...) asparagine).

This sequence belongs to the glycosyl hydrolase 12 (cellulase H) family.

The protein localises to the secreted. The catalysed reaction is xyloglucan + H2O = xyloglucan oligosaccharides.. Its function is as follows. Catalyzes endohydrolysis of 1,4-beta-D-glucosidic linkages in xyloglucan with retention of the beta-configuration of the glycosyl residues. Specific for xyloglucan and does not hydrolyze other cell wall components. In Aspergillus fumigatus (strain ATCC MYA-4609 / CBS 101355 / FGSC A1100 / Af293) (Neosartorya fumigata), this protein is Probable xyloglucan-specific endo-beta-1,4-glucanase A (xgeA).